We begin with the raw amino-acid sequence, 79 residues long: D-alanyl carrier protein (79 aa).

A Carrier domain is found at 1–76; sequence MEEQVLSLLE…RVMAYVKKRV (76 aa). Serine 34 is modified (O-(pantetheine 4'-phosphoryl)serine).

It belongs to the DltC family. Post-translationally, 4'-phosphopantetheine is transferred from CoA to a specific serine of apo-DCP.

The protein resides in the cytoplasm. The protein operates within cell wall biogenesis; lipoteichoic acid biosynthesis. Functionally, carrier protein involved in the D-alanylation of lipoteichoic acid (LTA). The loading of thioester-linked D-alanine onto DltC is catalyzed by D-alanine--D-alanyl carrier protein ligase DltA. The DltC-carried D-alanyl group is further transferred to cell membrane phosphatidylglycerol (PG) by forming an ester bond, probably catalyzed by DltD. D-alanylation of LTA plays an important role in modulating the properties of the cell wall in Gram-positive bacteria, influencing the net charge of the cell wall. This is D-alanyl carrier protein from Abiotrophia defectiva (Streptococcus defectivus).